We begin with the raw amino-acid sequence, 104 residues long: Large ribosomal subunit protein bL21 (104 aa).

It belongs to the bacterial ribosomal protein bL21 family. Part of the 50S ribosomal subunit. Contacts protein L20.

Its function is as follows. This protein binds to 23S rRNA in the presence of protein L20. The sequence is that of Large ribosomal subunit protein bL21 from Pseudomonas entomophila (strain L48).